The chain runs to 597 residues: Protein GRISEA (597 aa).

Residues Met-1 to Leu-41 constitute a DNA-binding region (copper-fist). Cys-11, Cys-14, Cys-23, and His-25 together coordinate Zn(2+). 4 disordered regions span residues Pro-70–Arg-115, Ala-233–Gly-352, Ser-407–Asn-428, and Ser-467–Leu-541. The segment covering Ser-92–Thr-103 has biased composition (polar residues). Residues Lys-104 to Arg-115 show a composition bias toward low complexity. Positions Gly-269–Lys-281 are enriched in gly residues. The segment covering Gln-287–Gln-314 has biased composition (pro residues). Residues Asn-469 to Ser-495 show a composition bias toward low complexity. Positions Ala-521–Ala-530 are enriched in polar residues.

It localises to the nucleus. Copper-sensing transcription factor that regulates copper uptake by transactivation of Ctr3, a high affinity copper permease. Binds to the palindromic UAS sequence 5'-TGTTGCTCANNNNAGAGCAACT-3'. Also transactivates Sod2, a mitochondrial manganese superoxide dismutase through the palindromic UAS sequence 5'-GTTTGCTCA-3' with 352 bp separating the two inverted repeats. Loss of function indirectly leads to rearrangement of mitochondrial DNA associated with senescence in wild-type strains. This Podospora anserina (Pleurage anserina) protein is Protein GRISEA.